Here is a 675-residue protein sequence, read N- to C-terminus: PTS system glucose-specific EIICBA component (675 aa).

The 412-residue stretch at 3–414 (KKLFGQLQRI…FNFKTPGRED (412 aa)) folds into the PTS EIIC type-1 domain. The next 11 helical transmembrane spans lie at 16-36 (LMLP…GTAF), 59-79 (MMTG…ALGV), 81-101 (IGLA…FIIM), 126-146 (VLGI…GALA), 173-193 (IMMA…WPFI), 199-219 (AFST…FGFI), 273-293 (FMQG…LAIY), 303-323 (VVGG…ITEP), 328-348 (FLFV…LSFL), 355-375 (LHLG…GILP), and 378-398 (TPWW…YVVF). One can recognise a PTS EIIB type-1 domain in the interval 425-506 (SKLPFDVLDA…ARIMNGDITK (82 aa)). Residue C447 is the Phosphocysteine intermediate; for EIIB activity of the active site. The 105-residue stretch at 547–651 (DKVFSEKMMG…SVVTPVIITN (105 aa)) folds into the PTS EIIA type-1 domain. H599 acts as the Tele-phosphohistidine intermediate; for EIIA activity in catalysis.

The protein localises to the cell membrane. The catalysed reaction is N(pros)-phospho-L-histidyl-[protein] + D-glucose(out) = D-glucose 6-phosphate(in) + L-histidyl-[protein]. Functionally, the phosphoenolpyruvate-dependent sugar phosphotransferase system (sugar PTS), a major carbohydrate active transport system, catalyzes the phosphorylation of incoming sugar substrates concomitantly with their translocation across the cell membrane. This system is involved in glucose transport. The sequence is that of PTS system glucose-specific EIICBA component (ptsG) from Staphylococcus haemolyticus (strain JCSC1435).